Here is a 391-residue protein sequence, read N- to C-terminus: uncharacterized protein (391 aa).

The region spanning 235 to 330 (VFILSRINLL…LYLKNETQKS (96 aa)) is the HTH arsR-type domain.

This is an uncharacterized protein from Methanocaldococcus jannaschii (strain ATCC 43067 / DSM 2661 / JAL-1 / JCM 10045 / NBRC 100440) (Methanococcus jannaschii).